Consider the following 532-residue polypeptide: MLASTFSYRMYKTALILAALLGSGQAQQVGTSQAEVHPSMTWQSCTAGGSCTTNNGKVVIDANWRWVHKVGDYTNCYTGNTWDTTICPDDATCASNCALEGANYESTYGVTASGNSLRLNFVTTSQQKNIGSRLYMMKDDSTYEMFKLLNQEFTFDVDVSNLPCGLNGALYFVAMDADGGMSKYPTNKAGAKYGTGYCDSQCPRDLKFINGQANVEGWQPSSNDANAGTGNHGSCCAEMDIWEANSISTAFTPHPCDTPGQVMCTGDACGGTYSSDRYGGTCDPDGCDFNSFRQGNKTFYGPGMTVDTKSKFTVVTQFITDDGTSSGTLKEIKRFYVQNGKVIPNSESTWTGVSGNSITTEYCTAQKSLFQDQNVFEKHGGLEGMGAALAQGMVLVMSLWDDHSANMLWLDSNYPTTASSTTPGVARGTCDISSGVPADVEANHPDAYVVYSNIKVGPIGSTFNSGGSNPGGGTTTTTTTQPTTTTTTAGNPGGTGVAQHYGQCGGIGWTGPTTCASPYTCQKLNDYYSQCL.

A signal peptide spans M1–A26. The interval Q27–S461 is catalytic. The Nucleophile role is filled by E238. The active-site Proton donor is E243. N296 is a glycosylation site (N-linked (GlcNAc...) asparagine). The segment at T462–T495 is disordered. The tract at residues T462 to G496 is thr-rich linker. A compositionally biased stretch (low complexity) spans T475–G490. The 37-residue stretch at G496–L532 folds into the CBM1 domain. 2 disulfides stabilise this stretch: C504–C521 and C515–C531.

Belongs to the glycosyl hydrolase 7 (cellulase C) family.

The protein resides in the secreted. It catalyses the reaction Hydrolysis of (1-&gt;4)-beta-D-glucosidic linkages in cellulose and cellotetraose, releasing cellobiose from the non-reducing ends of the chains.. Functionally, the biological conversion of cellulose to glucose generally requires three types of hydrolytic enzymes: (1) Endoglucanases which cut internal beta-1,4-glucosidic bonds; (2) Exocellobiohydrolases that cut the disaccharide cellobiose from the non-reducing end of the cellulose polymer chain; (3) Beta-1,4-glucosidases which hydrolyze the cellobiose and other short cello-oligosaccharides to glucose. This is Probable 1,4-beta-D-glucan cellobiohydrolase B (cbhB) from Aspergillus fumigatus (strain CBS 144.89 / FGSC A1163 / CEA10) (Neosartorya fumigata).